We begin with the raw amino-acid sequence, 667 residues long: Coiled-coil domain-containing protein 154 (667 aa).

Coiled-coil stretches lie at residues 76-182 (VVEL…QEAG), 215-302 (RRVD…GQHE), 384-410 (LLRE…SGHL), and 457-521 (LRGV…KEDN).

It is found in the early endosome. The protein is Coiled-coil domain-containing protein 154 of Homo sapiens (Human).